The primary structure comprises 401 residues: Multidrug resistance protein MdtH (401 aa).

11 consecutive transmembrane segments (helical) span residues 13-33 (YFLL…FPLI), 34-54 (SIRF…ALGL), 99-116 (PWIL…GTLF), 139-159 (LLMM…SWLL), 165-185 (FVCW…VWLL), 214-234 (VLTL…LPIV), 243-263 (AAVK…LYPI), 277-297 (LMFG…ITHL), 299-319 (TLFM…PARE), 340-360 (LGLA…YDTG), and 368-388 (LPWF…YWQF).

It belongs to the major facilitator superfamily. DHA1 family. MdtH (TC 2.A.1.2.21) subfamily.

It is found in the cell inner membrane. In Yersinia enterocolitica serotype O:8 / biotype 1B (strain NCTC 13174 / 8081), this protein is Multidrug resistance protein MdtH.